The primary structure comprises 338 residues: Glycerol-3-phosphate dehydrogenase [NAD(P)+] (338 aa).

NADPH is bound by residues Trp-20 and Lys-110. Lys-110, Gly-141, and Ser-143 together coordinate sn-glycerol 3-phosphate. An NADPH-binding site is contributed by Ala-145. 5 residues coordinate sn-glycerol 3-phosphate: Lys-197, Asp-250, Ser-260, Arg-261, and Asn-262. Lys-197 functions as the Proton acceptor in the catalytic mechanism. NADPH is bound at residue Arg-261. Glu-287 lines the NADPH pocket.

It belongs to the NAD-dependent glycerol-3-phosphate dehydrogenase family.

The protein resides in the cytoplasm. The enzyme catalyses sn-glycerol 3-phosphate + NAD(+) = dihydroxyacetone phosphate + NADH + H(+). It carries out the reaction sn-glycerol 3-phosphate + NADP(+) = dihydroxyacetone phosphate + NADPH + H(+). The protein operates within membrane lipid metabolism; glycerophospholipid metabolism. Functionally, catalyzes the reduction of the glycolytic intermediate dihydroxyacetone phosphate (DHAP) to sn-glycerol 3-phosphate (G3P), the key precursor for phospholipid synthesis. In Aster yellows witches'-broom phytoplasma (strain AYWB), this protein is Glycerol-3-phosphate dehydrogenase [NAD(P)+].